The following is a 111-amino-acid chain: MSCPIDSKKLEEICLEAAQPVLKASEYDGDKTAEMNQSVIYAVLNALNKETQSYKWIVSSTLVQKLPEDHPSRGVHAAHAACWNCEKDGMTTIKESGEAIDVVLSIMWISI.

It belongs to the dynein light chain Tctex-type family.

Its subcellular location is the cytoplasm. The protein localises to the cytoskeleton. Its function is as follows. Acts as a non-catalytic accessory component of a dynein complex. In Schizosaccharomyces pombe (strain 972 / ATCC 24843) (Fission yeast), this protein is Dynein light chain Tctex-type (dlc1).